We begin with the raw amino-acid sequence, 580 residues long: Sensor histidine kinase YvrG (580 aa).

Residues 1–6 (MRLRWK) are Cytoplasmic-facing. The helical transmembrane segment at 7 to 27 (FLFHFFGQMLIVILLLTVMLV) threads the bilayer. Topologically, residues 28–261 (ASFFYLDARF…KSFLKVVLKA (234 aa)) are extracellular. A helical transmembrane segment spans residues 262–282 (MFLVMAVLFMYIIWMTVWYMF). The Cytoplasmic portion of the chain corresponds to 283 to 580 (RFGLPIFHTI…TVITILFKKQ (298 aa)). Positions 363 to 580 (GLSHDLKTPL…TVITILFKKQ (218 aa)) constitute a Histidine kinase domain. H366 carries the post-translational modification Phosphohistidine; by autocatalysis.

The protein resides in the cell membrane. The catalysed reaction is ATP + protein L-histidine = ADP + protein N-phospho-L-histidine.. Functionally, member of the two-component regulatory system YvrG/YvrH that positively regulates 7 transcriptional units (wprA, wapA-yxxG, dltABCDE, sunA, sunT-bdbA-yolJ-bdbB, sigO-rsoA, and sigX-rsiX), and negatively regulates the lytABC operon. Probably activates YvrH by phosphorylation. This is Sensor histidine kinase YvrG (yvrG) from Bacillus subtilis (strain 168).